A 102-amino-acid polypeptide reads, in one-letter code: Co-chaperonin GroES (102 aa).

This sequence belongs to the GroES chaperonin family. Heptamer of 7 subunits arranged in a ring. Interacts with the chaperonin GroEL.

The protein resides in the cytoplasm. Functionally, together with the chaperonin GroEL, plays an essential role in assisting protein folding. The GroEL-GroES system forms a nano-cage that allows encapsulation of the non-native substrate proteins and provides a physical environment optimized to promote and accelerate protein folding. GroES binds to the apical surface of the GroEL ring, thereby capping the opening of the GroEL channel. The polypeptide is Co-chaperonin GroES (Chlamydia pneumoniae (Chlamydophila pneumoniae)).